Consider the following 398-residue polypeptide: MSSLSRVLRGTFNTCPIRRFSSAATVVSEPTAVTAAISPPQKSLTSLVNGERNPKRIVEKFKKACESERFRTNIAVYDRTVRRLVAAKRLHYVEEILEEQKKYRDMSKEGFAARIISLYGKAGMFENAQKVFEEMPNRDCKRSVLSFNALLSAYRLSKKFDVVEELFNELPGKLSIKPDIVSYNTLIKALCEKDSLPEAVALLDEIENKGLKPDIVTFNTLLLSSYLKGQFELGEEIWAKMVEKNVAIDIRTYNARLLGLANEAKSKELVNLFGELKASGLKPDVFSFNAMIRGSINEGKMDEAEAWYKEIVKHGYRPDKATFALLLPAMCKAGDFESAIELFKETFSKRYLVGQTTLQQLVDELVKGSKREEAEEIVKIAKTNDFLKLKLNLPSQEE.

The transit peptide at 1–19 (MSSLSRVLRGTFNTCPIRR) directs the protein to the mitochondrion. 7 PPR repeats span residues 108 to 142 (KEGF…DCKR), 143 to 173 (SVLS…LPGK), 179 to 213 (DIVS…GLKP), 214 to 248 (DIVT…NVAI), 249 to 283 (DIRT…GLKP), 284 to 318 (DVFS…GYRP), and 319 to 353 (DKAT…RYLV).

The protein belongs to the PPR family. P subfamily. Component of the mitochondrial ribosome small subunit.

It localises to the mitochondrion. This Arabidopsis thaliana (Mouse-ear cress) protein is Small ribosomal subunit protein mS78 (rPPR3a).